The chain runs to 128 residues: Sulfurtransferase TusD (128 aa).

Residue Cys78 is the Cysteine persulfide intermediate of the active site.

This sequence belongs to the DsrE/TusD family. In terms of assembly, heterohexamer, formed by a dimer of trimers. The hexameric TusBCD complex contains 2 copies each of TusB, TusC and TusD. The TusBCD complex interacts with TusE.

The protein resides in the cytoplasm. Functionally, part of a sulfur-relay system required for 2-thiolation of 5-methylaminomethyl-2-thiouridine (mnm(5)s(2)U) at tRNA wobble positions. Accepts sulfur from TusA and transfers it in turn to TusE. The sequence is that of Sulfurtransferase TusD from Escherichia coli O139:H28 (strain E24377A / ETEC).